Reading from the N-terminus, the 509-residue chain is Maturase K (509 aa).

The protein belongs to the intron maturase 2 family. MatK subfamily.

Its subcellular location is the plastid. The protein resides in the chloroplast. Functionally, usually encoded in the trnK tRNA gene intron. Probably assists in splicing its own and other chloroplast group II introns. This chain is Maturase K, found in Nicotiana tomentosiformis (Tobacco).